A 246-amino-acid polypeptide reads, in one-letter code: Bis(5'-nucleosyl)-tetraphosphatase PrpE [asymmetrical] (246 aa).

This sequence belongs to the PrpE family. The cofactor is Ni(2+).

It carries out the reaction P(1),P(4)-bis(5'-guanosyl) tetraphosphate + H2O = GMP + GTP + 2 H(+). Its function is as follows. Asymmetrically hydrolyzes Ap4p to yield AMP and ATP. In Bacillus anthracis (strain A0248), this protein is Bis(5'-nucleosyl)-tetraphosphatase PrpE [asymmetrical].